The primary structure comprises 568 residues: MDQDAFILKEDSEVEREAPGGRESLSDVIGFLDAVLSSEPTDIGGDRSWLHNTINTPQGPGSAHRAKSEGEGEVSTPSTQDNRSGEESRVSGRTSKPEAEAHAGNLDKQNIHRAFGGRTGTNSVSQDLGDGGDSGILENPPNERGYPRSGIEDENREMAAHPDKRGEDQAEGLPEEVRGGTSLPDEGEGGASNNGRSMEPGSSHSARVTGVLVIPSPELEEAVLRRNKRRPTNSGSKPLTPATVPGTRSPPLNRYNSTGSPPGKPPSTQDEHINSGDTPAVRVKDRKPPIGTRSVSDCPANGRPIHPGLETDSTKKGIGENTSSMKEMATLLTSLGVIQSAQEFESSRDASYVFARRALKSANYAEMTFNVCGLILSAEKSSARKVDENKQLLKQIQESVESFRDIYKRFSEYQKEQNSLLMSNLSTLHIITDRGGKTDNTDSLTRSPSVFAKSKENKTKATRFDPSMETLEDMKYKPDLIREDEFRDEIRNPLYQERDTEPRASNASRLLPSKEKPTMHSLRLVIESSPLSRAEKAAYVKSLSKCKTDQEVKAVMELVEEDIESLTN.

Disordered stretches follow at residues 1–23 (MDQD…GGRE) and 38–320 (SEPT…GIGE). A compositionally biased stretch (basic and acidic residues) spans 7–20 (ILKEDSEVEREAPG). An N0 binding region spans residues 33–41 (DAVLSSEPT). The segment covering 50–59 (LHNTINTPQG) has biased composition (polar residues). Phosphoserine; by host is present on serine 68. The span at 83-101 (RSGEESRVSGRTSKPEAEA) shows a compositional bias: basic and acidic residues. Serine 125 is modified (phosphoserine; by host). The span at 150 to 168 (GIEDENREMAAHPDKRGED) shows a compositional bias: basic and acidic residues. Residues 191–206 (ASNNGRSMEPGSSHSA) are compositionally biased toward polar residues. Serine 192, serine 249, serine 257, and serine 260 each carry phosphoserine; by host. 2 multimerization regions span residues 344 to 411 (FESS…KRFS) and 362 to 432 (ANYA…HIIT). A bipartite nucleocapsid binding domain 1 region spans residues 345–412 (ESSRDASYVF…FRDIYKRFSE (68 aa)). Residues 364 to 429 (YAEMTFNVCG…LLMSNLSTLH (66 aa)) are a coiled coil. L protein binding regions lie at residues 412–445 (EYQK…DSLT) and 413–445 (YQKE…DSLT). Phosphoserine; by host occurs at positions 447 and 449. The interval 479 to 568 (DLIREDEFRD…VEEDIESLTN (90 aa)) is bipartite nucleocapsid binding domain 2. The interaction with the nucleocapsid (N-RNA) stretch occupies residues 479 to 568 (DLIREDEFRD…VEEDIESLTN (90 aa)). Residues 495–516 (YQERDTEPRASNASRLLPSKEK) form a disordered region. The tract at residues 547 to 566 (KTDQEVKAVMELVEEDIESL) is formation of N-RNA complex involved in transcription and replication.

Belongs to the respirovirus P protein family. As to quaternary structure, homotetramer. Interacts (via multimerization domain) with polymerase L; this interaction forms the polymerase complex. Interacts (via N-terminus) with N0; this interaction allows P to chaperon N0 before encapsidation and form the N-P complex. Interacts (via C-terminus) with N-RNA template; this interaction positions the polymerase on the template. Phosphorylated by PKC/PRKCZ, and other unknown kinases. Phosphorylation is necessary for viral transcription and replication. The N-terminus contains the majority of phosphorylated sites. Ser-249 is the major site of phosphorylation, but is not necessary for most functions.

It is found in the host cytoplasm. Functionally, essential cofactor of the RNA polymerase L that plays a central role in the transcription and replication by forming the polymerase complex with RNA polymerase L and recruiting L to the genomic N-RNA template for RNA synthesis. Also plays a central role in the encapsidation of nascent RNA chains by forming the encapsidation complex with the nucleocapsid protein N (N-P complex). Acts as a chaperone for newly synthesized free N protein, so-called N0, allowing encapsidation of nascent RNA chains during replication. The nucleoprotein protein N prevents excessive phosphorylation of P, which leads to down-regulation of viral transcription/ replication. Participates, together with N, in the formation of viral factories (viroplasms), which are large inclusions in the host cytoplasm where replication takes place. Recruits host PI4KB and remodel the host endoplasmic reticulum membrane to form viral replication factories. This is Phosphoprotein (P/V/C) from Sendai virus (strain Fushimi) (SeV).